An 845-amino-acid polypeptide reads, in one-letter code: MNSAPLNDKLIFHTRRRRKQDALHSPSLNMDKKNDQPTVEIKNKVSENETDTVPRRDSQFNETSNLKNEPKVVNHNINMNDNLLIPVDPIIGKIKGNALHKMIIGNSVPDIGLTMPEEITQIMLSQNIDKKLNVTPVSQVTIVNPNKWNGFVLCHPGSSQHNDNNHVYTGNKFFVIYKRSNVMNNEQEINQFANDGIIILINKKEFKPKERDYQMRLFDSCSNVIVVEDEVDFDELSNVKICFSYEELTSASSLLPSHKKLIKYSCWPSNMVFPELKLINDYFSDLQSSVLNDLCLDESDGISTLFVVTNHVFAEQSDAIIESIHGHVLKDKIISKINSMFEKFEQRESRHIAFFGVVTTDEGNGNIHNKFLKNNCLIVMMNPLILTTYEKDYWNGLFSHFNKFIIESCVLSVYIAELIQVELLHGKAIKMLKQFFEAYGCTVLFECCETSKREEIGETSMSKSFDVECDTKKAGIEIQDNNINKRCDDNPNDDDGLDNYYVTDIDETEEDVEAIQKNSKCDDILTSDLRKLLKPSTLGLEVTIPEPSYAATEAEVEDQNSERNDDNALNESLCTEQQDDETVIVERNEEVENGISDDKYISCSYRDFINSETLKTHAHRFLSEQRFERENLEQIIEQLNCTVDELRQNSDSLIKELDDQKRLHSDAVDAYVEQVDVVKNKEIEYESRIAELEHELDELKKSNEHTRPSNANLECFQEGKNEYGVPELFAPFLRELKSLKETCPHLYDGECIQFENSENFLKFAIAKIQYMKLFATSKIKIQPAMLIGTGLMLSNESFNINGVLIQSSFDVNALRLLNVAQGESIEHSSGAMSVANFIKQFWSCV.

Disordered stretches follow at residues 17–37 and 550–573; these read RRKQDALHSPSLNMDKKNDQP and AATEAEVEDQNSERNDDNALNESL. Residues 622-707 adopt a coiled-coil conformation; sequence LSEQRFEREN…ELKKSNEHTR (86 aa).

This is an uncharacterized protein from Saccharum officinarum (Sugarcane).